A 111-amino-acid polypeptide reads, in one-letter code: Class I hydrophobin 10 (111 aa).

The first 17 residues, 1–17 (MLFNTFVVTALASLAAA), serve as a signal peptide directing secretion. 4 cysteine pairs are disulfide-bonded: cysteine 30–cysteine 90, cysteine 37–cysteine 84, cysteine 38–cysteine 71, and cysteine 91–cysteine 104.

Belongs to the fungal hydrophobin family. In terms of assembly, self-assembles to form functional amyloid fibrils called rodlets. Self-assembly into fibrillar rodlets occurs spontaneously at hydrophobic:hydrophilic interfaces and the rodlets further associate laterally to form amphipathic monolayers.

Its subcellular location is the secreted. The protein localises to the cell wall. Its function is as follows. Aerial growth, conidiation, and dispersal of filamentous fungi in the environment rely upon a capability of their secreting small amphipathic proteins called hydrophobins (HPBs) with low sequence identity. Class I can self-assemble into an outermost layer of rodlet bundles on aerial cell surfaces, conferring cellular hydrophobicity that supports fungal growth, development and dispersal; whereas Class II form highly ordered films at water-air interfaces through intermolecular interactions but contribute nothing to the rodlet structure. The protein is Class I hydrophobin 10 of Pleurotus ostreatus (strain PC15) (Oyster mushroom).